A 232-amino-acid chain; its full sequence is Large ribosomal subunit protein uL1 (232 aa).

The protein belongs to the universal ribosomal protein uL1 family. As to quaternary structure, part of the 50S ribosomal subunit.

Functionally, binds directly to 23S rRNA. The L1 stalk is quite mobile in the ribosome, and is involved in E site tRNA release. Its function is as follows. Protein L1 is also a translational repressor protein, it controls the translation of the L11 operon by binding to its mRNA. In Liberibacter asiaticus (Citrus greening disease), this protein is Large ribosomal subunit protein uL1.